A 327-amino-acid chain; its full sequence is Malate dehydrogenase (327 aa).

Residue 12 to 18 (GAAGQIA) coordinates NAD(+). Positions 93 and 99 each coordinate substrate. NAD(+) contacts are provided by residues N106, Q113, and 130 to 132 (VGN). N132 and R163 together coordinate substrate. H188 (proton acceptor) is an active-site residue.

This sequence belongs to the LDH/MDH superfamily. MDH type 2 family.

It catalyses the reaction (S)-malate + NAD(+) = oxaloacetate + NADH + H(+). Its function is as follows. Catalyzes the reversible oxidation of malate to oxaloacetate. This Burkholderia mallei (strain NCTC 10247) protein is Malate dehydrogenase.